A 230-amino-acid chain; its full sequence is Ribulose-phosphate 3-epimerase (230 aa).

Ser-10 serves as a coordination point for substrate. The a divalent metal cation site is built by His-35, Asp-37, and His-68. The Proton acceptor role is filled by Asp-37. Residues His-68, Gly-146–Gly-149, Asp-179–Gly-181, and Gly-201–Ser-202 each bind substrate. Residue Asp-179 coordinates a divalent metal cation. The active-site Proton donor is Asp-179.

It belongs to the ribulose-phosphate 3-epimerase family. Homohexamer. It depends on a divalent metal cation as a cofactor.

The enzyme catalyses D-ribulose 5-phosphate = D-xylulose 5-phosphate. The protein operates within carbohydrate degradation. In terms of biological role, catalyzes the reversible epimerization of D-ribulose 5-phosphate to D-xylulose 5-phosphate. This chain is Ribulose-phosphate 3-epimerase, found in Synechocystis sp. (strain ATCC 27184 / PCC 6803 / Kazusa).